The following is a 278-amino-acid chain: Tryptophan synthase alpha chain (278 aa).

Active-site proton acceptor residues include E50 and D61.

The protein belongs to the TrpA family. In terms of assembly, tetramer of two alpha and two beta chains.

The enzyme catalyses (1S,2R)-1-C-(indol-3-yl)glycerol 3-phosphate + L-serine = D-glyceraldehyde 3-phosphate + L-tryptophan + H2O. The protein operates within amino-acid biosynthesis; L-tryptophan biosynthesis; L-tryptophan from chorismate: step 5/5. In terms of biological role, the alpha subunit is responsible for the aldol cleavage of indoleglycerol phosphate to indole and glyceraldehyde 3-phosphate. The protein is Tryptophan synthase alpha chain of Rhodopseudomonas palustris (strain BisA53).